The following is an 893-amino-acid chain: TBC domain-containing protein kinase-like protein (893 aa).

Positions 1 to 273 constitute a Protein kinase domain; sequence MFPLKDAEMG…PDQLMKDKVF (273 aa). Residues 466–651 enclose the Rab-GAP TBC domain; it reads DIPPLMRGLT…HLWDTLLLGN (186 aa). Residues 710 to 749 are disordered; the sequence is YRQHAQPPKPSSDSSGGRSSAPYFSAECPDPPKTDLSRES. The span at 720–729 shows a compositional bias: low complexity; the sequence is SSDSSGGRSS. Positions 790–889 constitute a Rhodanese domain; sequence SKPKLLVVDI…IKPTGLLTIP (100 aa).

Belongs to the protein kinase superfamily. As to quaternary structure, component of the FERRY complex composed of five subunits, TBCK, PPP1R21, FERRY3, CRYZL1 and GATD1 with a ratio of 1:2:1:2:4, respectively.

Its subcellular location is the cytoplasm. The protein localises to the cytoskeleton. The protein resides in the spindle. It is found in the midbody. It localises to the early endosome. Functionally, component of the FERRY complex (Five-subunit Endosomal Rab5 and RNA/ribosome intermediary). The FERRY complex directly interacts with mRNAs and RAB5A, and functions as a RAB5A effector involved in the localization and the distribution of specific mRNAs most likely by mediating their endosomal transport. The complex recruits mRNAs and ribosomes to early endosomes through direct mRNA-interaction. Also involved in the modulation of mTOR signaling and expression of mTOR complex components. Involved in the control of actin-cytoskeleton organization. This is TBC domain-containing protein kinase-like protein from Homo sapiens (Human).